A 422-amino-acid chain; its full sequence is UDP-N-acetylglucosamine 1-carboxyvinyltransferase (422 aa).

Residue 23 to 24 coordinates phosphoenolpyruvate; sequence KN. Arg92 contacts UDP-N-acetyl-alpha-D-glucosamine. Cys116 acts as the Proton donor in catalysis. Position 116 is a 2-(S-cysteinyl)pyruvic acid O-phosphothioketal (Cys116). UDP-N-acetyl-alpha-D-glucosamine is bound by residues 121–125, 161–165, Asp306, and Ile328; these read RPVDL and KVSVG.

This sequence belongs to the EPSP synthase family. MurA subfamily.

The protein localises to the cytoplasm. It catalyses the reaction phosphoenolpyruvate + UDP-N-acetyl-alpha-D-glucosamine = UDP-N-acetyl-3-O-(1-carboxyvinyl)-alpha-D-glucosamine + phosphate. It participates in cell wall biogenesis; peptidoglycan biosynthesis. Functionally, cell wall formation. Adds enolpyruvyl to UDP-N-acetylglucosamine. The protein is UDP-N-acetylglucosamine 1-carboxyvinyltransferase of Aliivibrio fischeri (strain MJ11) (Vibrio fischeri).